A 508-amino-acid polypeptide reads, in one-letter code: Photosystem II CP47 reaction center protein (508 aa).

6 consecutive transmembrane segments (helical) span residues 21–36, 101–115, 140–156, 203–218, 237–252, and 457–472; these read AVHIMHTALVAGWAGS, IVFSGLCFLAAIWHW, GIHLFLAGLACFGFGAF, IAAGTLGILAGLFHLS, VLSSSIAAVFFAAFVV, and SFALLFFFGHIWHGSR.

It belongs to the PsbB/PsbC family. PsbB subfamily. As to quaternary structure, PSII is composed of 1 copy each of membrane proteins PsbA, PsbB, PsbC, PsbD, PsbE, PsbF, PsbH, PsbI, PsbJ, PsbK, PsbL, PsbM, PsbT, PsbX, PsbY, PsbZ, Psb30/Ycf12, at least 3 peripheral proteins of the oxygen-evolving complex and a large number of cofactors. It forms dimeric complexes. Requires Binds multiple chlorophylls. PSII binds additional chlorophylls, carotenoids and specific lipids. as cofactor.

It localises to the plastid. Its subcellular location is the chloroplast thylakoid membrane. One of the components of the core complex of photosystem II (PSII). It binds chlorophyll and helps catalyze the primary light-induced photochemical processes of PSII. PSII is a light-driven water:plastoquinone oxidoreductase, using light energy to abstract electrons from H(2)O, generating O(2) and a proton gradient subsequently used for ATP formation. This chain is Photosystem II CP47 reaction center protein, found in Lotus japonicus (Lotus corniculatus var. japonicus).